The following is an 84-amino-acid chain: Large ribosomal subunit protein bL27 (84 aa).

Positions 1–20 (MAHKKGGGSTKNGRDSNPKY) are disordered.

It belongs to the bacterial ribosomal protein bL27 family.

This Prosthecochloris vibrioformis (Chlorobium vibrioforme) protein is Large ribosomal subunit protein bL27 (rpmA).